Reading from the N-terminus, the 301-residue chain is GTPase Era (301 aa).

The 170-residue stretch at 4–173 (KAGFVALIGK…LECISKHLSP (170 aa)) folds into the Era-type G domain. The interval 12–19 (GKPNAGKS) is G1. GTP is bound at residue 12–19 (GKPNAGKS). A G2 region spans residues 38 to 42 (NATRK). Residues 64–67 (DTPG) form a G3 region. GTP contacts are provided by residues 64–68 (DTPGL) and 122–125 (SKID). Positions 122-125 (SKID) are G4. The interval 152-154 (LSA) is G5. Residues 204 to 280 (LSDEIPYESD…FLNLQVIAQK (77 aa)) enclose the KH type-2 domain.

This sequence belongs to the TRAFAC class TrmE-Era-EngA-EngB-Septin-like GTPase superfamily. Era GTPase family. In terms of assembly, monomer.

It is found in the cytoplasm. The protein resides in the cell inner membrane. In terms of biological role, an essential GTPase that binds both GDP and GTP, with rapid nucleotide exchange. Plays a role in 16S rRNA processing and 30S ribosomal subunit biogenesis and possibly also in cell cycle regulation and energy metabolism. The chain is GTPase Era from Helicobacter pylori (strain Shi470).